Reading from the N-terminus, the 314-residue chain is Ornithine carbamoyltransferase (314 aa).

Carbamoyl phosphate is bound by residues 61-64 (STRT), Gln-88, Arg-112, and 139-142 (HPCQ). L-ornithine-binding positions include Asn-170, Asp-234, and 238-239 (SM). Residues 274-275 (CL) and Arg-302 each bind carbamoyl phosphate.

This sequence belongs to the aspartate/ornithine carbamoyltransferase superfamily. OTCase family.

The protein localises to the cytoplasm. It catalyses the reaction carbamoyl phosphate + L-ornithine = L-citrulline + phosphate + H(+). It functions in the pathway amino-acid biosynthesis; L-arginine biosynthesis; L-arginine from L-ornithine and carbamoyl phosphate: step 1/3. Functionally, reversibly catalyzes the transfer of the carbamoyl group from carbamoyl phosphate (CP) to the N(epsilon) atom of ornithine (ORN) to produce L-citrulline. The protein is Ornithine carbamoyltransferase of Anoxybacillus flavithermus (strain DSM 21510 / WK1).